Here is a 360-residue protein sequence, read N- to C-terminus: Phosphoserine aminotransferase (360 aa).

R41 is an L-glutamate binding site. Residues 75–76, W101, T152, D172, and Q195 each bind pyridoxal 5'-phosphate; that span reads GR. K196 carries the post-translational modification N6-(pyridoxal phosphate)lysine. Position 237-238 (237-238) interacts with pyridoxal 5'-phosphate; that stretch reads NT.

It belongs to the class-V pyridoxal-phosphate-dependent aminotransferase family. SerC subfamily. Homodimer. Pyridoxal 5'-phosphate is required as a cofactor.

Its subcellular location is the cytoplasm. It carries out the reaction O-phospho-L-serine + 2-oxoglutarate = 3-phosphooxypyruvate + L-glutamate. The catalysed reaction is 4-(phosphooxy)-L-threonine + 2-oxoglutarate = (R)-3-hydroxy-2-oxo-4-phosphooxybutanoate + L-glutamate. It functions in the pathway amino-acid biosynthesis; L-serine biosynthesis; L-serine from 3-phospho-D-glycerate: step 2/3. Its pathway is cofactor biosynthesis; pyridoxine 5'-phosphate biosynthesis; pyridoxine 5'-phosphate from D-erythrose 4-phosphate: step 3/5. In terms of biological role, catalyzes the reversible conversion of 3-phosphohydroxypyruvate to phosphoserine and of 3-hydroxy-2-oxo-4-phosphonooxybutanoate to phosphohydroxythreonine. The protein is Phosphoserine aminotransferase of Pseudoalteromonas translucida (strain TAC 125).